The primary structure comprises 270 residues: UBX domain-containing protein 8 (270 aa).

Residue methionine 1 is a topological domain, cytoplasmic. Residues 2–22 (ASRGVVGIFFLSAVPLVCLEL) traverse the membrane as a helical segment. Topologically, residues 23 to 33 (RRGIPDIGIKD) are lumenal. Residues 34–54 (FLLLCGRILLLLALLTLIISV) form a helical membrane-spanning segment. The Cytoplasmic segment spans residues 55–270 (TTSWLNSFKS…LILEEKEQTN (216 aa)). The segment at 130–171 (SGHKLGGDEGTSQTSFETSNREAAKSQNLPKPLTEFPSPAEQ) is disordered. Serine 167 carries the phosphoserine modification. One can recognise a UBX domain in the interval 187 to 263 (TAEEVVTVAL…GITVDTVLIL (77 aa)).

Interacts with SYVN1 and VCP. In terms of tissue distribution, expressed abundantly in ovary and testis, and weakly in all other tissues tested.

Its subcellular location is the endoplasmic reticulum membrane. Involved in endoplasmic reticulum-associated degradation (ERAD) for misfolded lumenal proteins, possibly by tethering VCP to the endoplasmic reticulum membrane. May play a role in reproduction. This chain is UBX domain-containing protein 8 (UBXN8), found in Homo sapiens (Human).